Consider the following 330-residue polypeptide: uncharacterized protein (330 aa).

2 disordered regions span residues 136–160 and 172–314; these read VPPS…DESS and DNEK…SQFN. The segment covering 223–235 has biased composition (pro residues); that stretch reads PKPPAPPPPPPVP. Low complexity predominate over residues 236-246; the sequence is ISMTPAAISVT. Polar residues-rich tracts occupy residues 263-276, 284-294, and 304-314; these read AQST…TTDE, TRSSSQSNSTV, and PASSPTFSQFN.

This is an uncharacterized protein from Danio rerio (Zebrafish).